Reading from the N-terminus, the 290-residue chain is MKRTPHLLAIQSHVVFGHAGNSAAVFPMQRIGVNAWPLNTVQFSNHTQYGQWAGEVLAPAQIPALVEGISNIGELGHCDAVLSGYLGSAEQGRAILAGVERIKAVNPKALYLCDPVMGHPEKGCIVPPEVSEFLLDEAAATADILCPNQLELDSFCGRRAQSLEDCVNMARSLLQRGPQVVLVKHLAYPGRAEEHFEMLLVTAEHSWHLRRPLLAFPRQPVGVGDLTSGLFLARVLLGDSWVQAFEFTAAAVHEVLLETQACASYELQLVRAQDRIAHPRVRFEAQLLAL.

Residues Ser12 and 47–48 (TQ) each bind substrate. Residues Asp114, Glu151, Lys184, and 211-214 (RPLL) contribute to the ATP site. Asp225 contacts substrate.

Belongs to the pyridoxine kinase family. PdxY subfamily. As to quaternary structure, homodimer. Requires Mg(2+) as cofactor.

It catalyses the reaction pyridoxal + ATP = pyridoxal 5'-phosphate + ADP + H(+). Its pathway is cofactor metabolism; pyridoxal 5'-phosphate salvage; pyridoxal 5'-phosphate from pyridoxal: step 1/1. Functionally, pyridoxal kinase involved in the salvage pathway of pyridoxal 5'-phosphate (PLP). Catalyzes the phosphorylation of pyridoxal to PLP. This chain is Pyridoxal kinase PdxY, found in Pseudomonas putida (strain ATCC 47054 / DSM 6125 / CFBP 8728 / NCIMB 11950 / KT2440).